Reading from the N-terminus, the 402-residue chain is B3 domain-containing protein LFL1 (402 aa).

The segment at Met-1–Thr-174 is disordered. Low complexity predominate over residues Ala-74–Ser-87. Residues Ser-88–Pro-102 show a composition bias toward pro residues. Composition is skewed to low complexity over residues Ser-103–Ser-139 and Pro-156–Pro-169. Positions Leu-181 to Gly-284 form a DNA-binding region, TF-B3. Residues Leu-381–Met-402 form a disordered region.

In terms of tissue distribution, expressed in anthers, pollen grains and young developing embryos.

It localises to the nucleus. Transcription repressor involved in flowering time regulation. Represses the flowering activator EHD1 by binding specifically to the DNA sequence 5'-CATGCATG-3 of its promoter. The protein is B3 domain-containing protein LFL1 (LFL1) of Oryza sativa subsp. japonica (Rice).